The sequence spans 142 residues: Hemoglobin subunit alpha-4 (142 aa).

The Globin domain occupies 2–142; that stretch reads TLTDSDKAAI…VATVLTSKYR (141 aa). Residue histidine 59 participates in O2 binding. A heme b-binding site is contributed by histidine 88.

Belongs to the globin family. As to quaternary structure, heterotetramer of two alpha chains and two beta chains. As to expression, red blood cells.

Its function is as follows. This is a larval (tadpole) alpha-globin. The sequence is that of Hemoglobin subunit alpha-4 (hba4) from Xenopus laevis (African clawed frog).